A 93-amino-acid chain; its full sequence is Acylphosphatase (93 aa).

The 87-residue stretch at 7–93 (RLTAWVHGRV…ADAIAGFTER (87 aa)) folds into the Acylphosphatase-like domain. Catalysis depends on residues R22 and N40.

The protein belongs to the acylphosphatase family.

The enzyme catalyses an acyl phosphate + H2O = a carboxylate + phosphate + H(+). This chain is Acylphosphatase (acyP), found in Mycolicibacterium vanbaalenii (strain DSM 7251 / JCM 13017 / BCRC 16820 / KCTC 9966 / NRRL B-24157 / PYR-1) (Mycobacterium vanbaalenii).